A 102-amino-acid chain; its full sequence is Protein translation factor SUI1 homolog (102 aa).

Belongs to the SUI1 family.

The protein is Protein translation factor SUI1 homolog of Cenarchaeum symbiosum (strain A).